A 432-amino-acid polypeptide reads, in one-letter code: E3 ubiquitin-protein ligase RNF135 (432 aa).

The RING-type zinc-finger motif lies at cysteine 21 to arginine 63. The tract at residues glycine 95–glutamate 121 is disordered. The segment covering proline 102–alanine 114 has biased composition (low complexity). Coiled-coil stretches lie at residues glutamate 121 to arginine 156 and aspartate 191 to threonine 216. The 192-residue stretch at proline 241–valine 432 folds into the B30.2/SPRY domain.

Homodimer. Interacts (homodimer) with RIGI (double-stranded RNA-bound oligomeric form); involved in both RIGI ubiquitination, oligomerization into filaments associated with viral RNAs and the bridging of these filaments. Interacts with UBE2D3 and UBE2N; E2 ubiquitin ligases involved in RNF135-mediated ubiquitination of RIGI and activation of the RIG-I signaling pathway. Interacts with PCBP2. In terms of processing, (Microbial infection) Cleaved and inactivated by hepatitis C virus NS3/NS4A. In terms of tissue distribution, expressed in skeletal muscle, spleen, kidney, placenta, prostate, stomach, thyroid and tongue. Also weakly expressed in heart, thymus, liver and lung.

The protein resides in the cytoplasm. It is found in the stress granule. It carries out the reaction S-ubiquitinyl-[E2 ubiquitin-conjugating enzyme]-L-cysteine + [acceptor protein]-L-lysine = [E2 ubiquitin-conjugating enzyme]-L-cysteine + N(6)-ubiquitinyl-[acceptor protein]-L-lysine.. It functions in the pathway protein modification; protein ubiquitination. In terms of biological role, E2-dependent E3 ubiquitin-protein ligase that functions as a RIGI coreceptor in the sensing of viral RNAs in cell cytoplasm and the activation of the antiviral innate immune response. Together with the UBE2D3, UBE2N and UB2V1 E2 ligases, catalyzes the 'Lys-63'-linked polyubiquitination of RIGI oligomerized on viral RNAs, an essential step in the activation of the RIG-I signaling pathway. Through a ubiquitin-independent parallel mechanism, which consists in bridging RIGI filaments forming on longer viral RNAs, further activates the RIG-I signaling pathway. This second mechanism that synergizes with the ubiquitin-dependent one would thereby allow an RNA length-dependent regulation of the RIG-I signaling pathway. Associated with the E2 ligase UBE2N, also constitutively synthesizes unanchored 'Lys-63'-linked polyubiquitin chains that may also activate the RIG-I signaling pathway. The polypeptide is E3 ubiquitin-protein ligase RNF135 (Homo sapiens (Human)).